The primary structure comprises 1400 residues: DNA-directed RNA polymerase subunit beta' (1400 aa).

Cysteine 70, cysteine 72, cysteine 85, and cysteine 88 together coordinate Zn(2+). Aspartate 460, aspartate 462, and aspartate 464 together coordinate Mg(2+). Positions 814, 889, 896, and 899 each coordinate Zn(2+).

It belongs to the RNA polymerase beta' chain family. In terms of assembly, the RNAP catalytic core consists of 2 alpha, 1 beta, 1 beta' and 1 omega subunit. When a sigma factor is associated with the core the holoenzyme is formed, which can initiate transcription. The cofactor is Mg(2+). Zn(2+) serves as cofactor.

It carries out the reaction RNA(n) + a ribonucleoside 5'-triphosphate = RNA(n+1) + diphosphate. Its function is as follows. DNA-dependent RNA polymerase catalyzes the transcription of DNA into RNA using the four ribonucleoside triphosphates as substrates. This Alcanivorax borkumensis (strain ATCC 700651 / DSM 11573 / NCIMB 13689 / SK2) protein is DNA-directed RNA polymerase subunit beta'.